The following is a 994-amino-acid chain: Sarcoplasmic/endoplasmic reticulum calcium ATPase 1 (994 aa).

Residues 1 to 48 (MEAAHSKSTEECLSYFGVSETTGLTPDQVKRHLEKYGPNELPAEEGKS) are Cytoplasmic-facing. Residues 49–69 (LWELVVEQFEDLLVRILLLAA) traverse the membrane as a helical segment. Residues 70–89 (CISFVLAWFEEGEETVTAFV) lie on the Lumenal side of the membrane. Residues 90-110 (EPFVILLILIANAIVGVWQER) traverse the membrane as a helical segment. Topologically, residues 111–253 (NAENAIEALK…QDKTPLQQKL (143 aa)) are cytoplasmic. Residues 254–273 (DEFGEQLSKVISLICVAVWL) form a helical membrane-spanning segment. Residues 274-295 (INIGHFNDPVHGGSWFRGAIYY) are Lumenal-facing. A helical transmembrane segment spans residues 296 to 313 (FKIAVALAVAAIPEGLPA). Ca(2+) contacts are provided by Val-304, Ala-305, Ile-307, and Glu-309. Over 314–757 (VITTCLALGT…EEGRAIYNNM (444 aa)) the chain is Cytoplasmic. Catalysis depends on Asp-351, which acts as the 4-aspartylphosphate intermediate. The Mg(2+) site is built by Asp-351 and Thr-353. Thr-353 lines the ATP pocket. Thr-441 is modified (phosphothreonine). Glu-442, Arg-489, Lys-515, and Arg-560 together coordinate ATP. Thr-569 carries the post-translational modification Phosphothreonine. At Ser-581 the chain carries Phosphoserine. Residues Thr-625, Gly-626, and Asp-627 each coordinate ATP. Position 643 is a phosphoserine (Ser-643). ATP is bound by residues Arg-678 and Lys-684. Residue Asp-703 participates in Mg(2+) binding. Asn-706 serves as a coordination point for ATP. Residues 758 to 777 (KQFIRYLISSNVGEVVCIFL) form a helical membrane-spanning segment. The Ca(2+) site is built by Asn-768 and Glu-771. The Lumenal portion of the chain corresponds to 778 to 787 (TAALGLPEAL). The helical transmembrane segment at 788–808 (IPVQLLWVNLVTDGLPATALG) threads the bilayer. The interval 788 to 808 (IPVQLLWVNLVTDGLPATALG) is interaction with PLN. The Ca(2+) site is built by Asn-796, Thr-799, and Asp-800. Over 809 to 828 (FNPPDLDIMDRPPRSPKEPL) the chain is Cytoplasmic. A helical membrane pass occupies residues 829–851 (ISGWLFFRYMAIGGYVGAATVGA). The Lumenal segment spans residues 852–897 (AAWWFLYAEDGPHVSYHQLTHFMQCTEHNPEFDGLDCEVFEAPEPM). Cys-876 and Cys-888 are disulfide-bonded. A helical transmembrane segment spans residues 898-917 (TMALSVLVTIEMCNALNSLS). Glu-908 lines the Ca(2+) pocket. The Cytoplasmic portion of the chain corresponds to 918–930 (ENQSLLRMPPWVN). Residues 931–949 (IWLLGSICLSMSLHFLILY) traverse the membrane as a helical segment. The tract at residues 932-943 (WLLGSICLSMSL) is interaction with PLN. At 950–964 (VDPLPMIFKLRALDF) the chain is on the lumenal side. A helical membrane pass occupies residues 965–985 (TQWLMVLKISLPVIGLDELLK). The Cytoplasmic portion of the chain corresponds to 986–994 (FIARNYLEG).

It belongs to the cation transport ATPase (P-type) (TC 3.A.3) family. Type IIA subfamily. In terms of assembly, interacts with sarcolipin (SLN). Interacts with phospholamban (PLN). Interacts with myoregulin (MRLN). Interacts with DWORF. Interacts with VMP1. It depends on Mg(2+) as a cofactor.

The protein localises to the endoplasmic reticulum membrane. Its subcellular location is the sarcoplasmic reticulum membrane. It carries out the reaction Ca(2+)(in) + ATP + H2O = Ca(2+)(out) + ADP + phosphate + H(+). With respect to regulation, inhibited by sarcolipin (SLN) and myoregulin (MRLN). Has also been shown to be reversibly inhibited by phospholamban (PLN) at low calcium concentrations in vitro. Dephosphorylated PLN decreases the apparent affinity of the ATPase for calcium in vitro and this inhibition is regulated by the phosphorylation of PLN. Enhanced by DWORF; DWORF increases activity by displacing sarcolipin (SLN), phospholamban (PLN) and myoregulin (MRLN). Functionally, key regulator of striated muscle performance by acting as the major Ca(2+) ATPase responsible for the reuptake of cytosolic Ca(2+) into the sarcoplasmic reticulum. Catalyzes the hydrolysis of ATP coupled with the translocation of calcium from the cytosol to the sarcoplasmic reticulum lumen. Contributes to calcium sequestration involved in muscular excitation/contraction. The sequence is that of Sarcoplasmic/endoplasmic reticulum calcium ATPase 1 (Atp2a1) from Mus musculus (Mouse).